Consider the following 569-residue polypeptide: Glutamate--tRNA ligase (569 aa).

A 'HIGH' region motif is present at residues 107-117 (PEPNGYPHIGH).

This sequence belongs to the class-I aminoacyl-tRNA synthetase family. Glutamate--tRNA ligase type 2 subfamily.

The protein resides in the cytoplasm. The catalysed reaction is tRNA(Glu) + L-glutamate + ATP = L-glutamyl-tRNA(Glu) + AMP + diphosphate. Its function is as follows. Catalyzes the attachment of glutamate to tRNA(Glu) in a two-step reaction: glutamate is first activated by ATP to form Glu-AMP and then transferred to the acceptor end of tRNA(Glu). The sequence is that of Glutamate--tRNA ligase from Nitrosopumilus maritimus (strain SCM1).